A 241-amino-acid chain; its full sequence is Orotidine 5'-phosphate decarboxylase (241 aa).

Substrate-binding positions include Asp16, Lys37, 64-73, Thr128, Arg190, Gln199, Gly219, and Arg220; that span reads DLKFHDIPTT. Lys66 (proton donor) is an active-site residue.

This sequence belongs to the OMP decarboxylase family. Type 1 subfamily. Homodimer.

The catalysed reaction is orotidine 5'-phosphate + H(+) = UMP + CO2. It participates in pyrimidine metabolism; UMP biosynthesis via de novo pathway; UMP from orotate: step 2/2. Functionally, catalyzes the decarboxylation of orotidine 5'-monophosphate (OMP) to uridine 5'-monophosphate (UMP). The chain is Orotidine 5'-phosphate decarboxylase from Prochlorococcus marinus (strain NATL2A).